Here is a 156-residue protein sequence, read N- to C-terminus: Small ribosomal subunit protein uS7 (156 aa).

It belongs to the universal ribosomal protein uS7 family. In terms of assembly, part of the 30S ribosomal subunit. Contacts proteins S9 and S11.

One of the primary rRNA binding proteins, it binds directly to 16S rRNA where it nucleates assembly of the head domain of the 30S subunit. Is located at the subunit interface close to the decoding center, probably blocks exit of the E-site tRNA. This is Small ribosomal subunit protein uS7 from Synechococcus sp. (strain JA-2-3B'a(2-13)) (Cyanobacteria bacterium Yellowstone B-Prime).